A 281-amino-acid chain; its full sequence is General control transcription factor GCN4 (281 aa).

A Phosphoserine modification is found at S17. Required for transcriptional activation stretches follow at residues 89–100 and 106–125; these read LDDAVVESFFSS and PMFE…SLFD. A Phosphothreonine; by PHO85 modification is found at T165. Residues 167–200 carry the Nuclear localization signal motif; that stretch reads VLEDAKLTQTRKVKKPNSVVKKSHHVGKDDESRL. A disordered region spans residues 217 to 248; that stretch reads LSPIVPESSDPAALKRARNTEAARRSRARKLQ. S218 is subject to Phosphoserine. The 57-residue stretch at 225–281 folds into the bZIP domain; that stretch reads SDPAALKRARNTEAARRSRARKLQRMKQLEDKVEELLSKNYHLENEVARLKKLVGER. The Nuclear localization signal signature appears at 231–249; that stretch reads KRARNTEAARRSRARKLQR. Residues 231-251 are basic motif; that stretch reads KRARNTEAARRSRARKLQRMK. The tract at residues 253-274 is leucine-zipper; it reads LEDKVEELLSKNYHLENEVARL.

The protein belongs to the bZIP family. GCN4 subfamily. As to quaternary structure, homodimer. Each subunit binds overlapping and non-identical half-sites that flank the central CG base-pair in the pseudo-palindromic motif 5'-ATGA[CG]TCAT-3'. Interacts with the mediator tail; the interaction with GAL11/MED15 is direct. Interacts with the SAGA histone acetyltransferase complex. Interacts with the SWI/SNF chromatin remodeling complex. In terms of processing, phosphorylated by the cyclin-CDK PCL5-PHO85. Phosphorylation of Thr-165 induces degradation of GCN4 by the E3 ubiquitin ligase complex SCF(Cdc4).

Its subcellular location is the nucleus. Master transcriptional regulator that mediates the response to amino acid starvation. Binds variations of the DNA sequence 5'-ATGA[CG]TCAT-3' in canonical nucleosome-depleted 5'-positioned promoters, and also within coding sequences and 3' non-coding regions. During nutrient starvation (low or poor amino acid, carbon or purine sources), it activates genes required for amino acid biosynthesis and transport, autophagy, cofactor biosynthesis and transport, mitochondrial transport, and additional downstream transcription factors. Activates transcription by recruiting multiple coactivators, including the mediator complex, the SAGA complex, and the SWI/SNF complex, to enable assembly of the pre-initiation complex at core promoters. This Saccharomyces cerevisiae (strain ATCC 204508 / S288c) (Baker's yeast) protein is General control transcription factor GCN4.